The chain runs to 283 residues: Acetylglutamate kinase (283 aa).

Substrate is bound by residues 63 to 64, R85, and N179; that span reads GG.

The protein belongs to the acetylglutamate kinase family. ArgB subfamily.

The protein resides in the cytoplasm. It catalyses the reaction N-acetyl-L-glutamate + ATP = N-acetyl-L-glutamyl 5-phosphate + ADP. It functions in the pathway amino-acid biosynthesis; L-arginine biosynthesis; N(2)-acetyl-L-ornithine from L-glutamate: step 2/4. Functionally, catalyzes the ATP-dependent phosphorylation of N-acetyl-L-glutamate. The chain is Acetylglutamate kinase from Clostridium kluyveri (strain NBRC 12016).